Consider the following 303-residue polypeptide: Protoporphyrin uptake protein 1 (303 aa).

The Extracellular portion of the chain corresponds to 1–18 (MSTTDSGFVLYHYTPSKA). Residues 19–39 (AAIVFVVLFIIMTVIFAVQTL) form a helical membrane-spanning segment. Residues 40–76 (YAARKSSKALKNNPFESSDDKVDSLEDAEYKQLKITP) are Cytoplasmic-facing. A helical membrane pass occupies residues 77-97 (TVFAFIPFFTGCIMEAVGYIG). The Extracellular segment spans residues 98 to 111 (RALSSSNPERTTPY). Residues 112-132 (IIQSVLLLVAPALIAATIYMI) form a helical membrane-spanning segment. Residues 133 to 154 (FGRLLHVMRCQSLILISARFGT) lie on the Cytoplasmic side of the membrane. The helical transmembrane segment at 155–175 (TFFVVGDVFSFFLQAAGGGLM) threads the bilayer. Residues 176–183 (SKAGSTKT) lie on the Extracellular side of the membrane. Residues 184–204 (GSGLITAGLFVQVIFFGFFII) form a helical membrane-spanning segment. The Cytoplasmic portion of the chain corresponds to 205–226 (NEIRFTVNVKRRCLFYEDISRK). The chain crosses the membrane as a helical span at residues 227-247 (WIFVNATLLLSSMLILLRSIV). The Extracellular segment spans residues 248 to 264 (RIVEFIQGFNGYIISHE). A helical membrane pass occupies residues 265-285 (YFIYVFDAVPMLLVIIAFSVG). Topologically, residues 286–303 (SFFGNVFDVIKECQTLSN) are cytoplasmic.

This sequence belongs to the lipid-translocating exporter (LTE) (TC 9.A.26.1) family. In terms of processing, N-glycosylated.

The protein resides in the cell membrane. Functionally, involved in inducible protoporphyrin IX influx and heme efflux. The chain is Protoporphyrin uptake protein 1 (PUG1) from Saccharomyces cerevisiae (strain ATCC 204508 / S288c) (Baker's yeast).